Here is a 342-residue protein sequence, read N- to C-terminus: Methylthioribose-1-phosphate isomerase (342 aa).

Residues 49–51 (RGA), R86, and Q187 each bind substrate. D228 acts as the Proton donor in catalysis. Position 238 to 239 (238 to 239 (NK)) interacts with substrate.

It belongs to the eIF-2B alpha/beta/delta subunits family. MtnA subfamily.

It carries out the reaction 5-(methylsulfanyl)-alpha-D-ribose 1-phosphate = 5-(methylsulfanyl)-D-ribulose 1-phosphate. It participates in amino-acid biosynthesis; L-methionine biosynthesis via salvage pathway; L-methionine from S-methyl-5-thio-alpha-D-ribose 1-phosphate: step 1/6. Functionally, catalyzes the interconversion of methylthioribose-1-phosphate (MTR-1-P) into methylthioribulose-1-phosphate (MTRu-1-P). The polypeptide is Methylthioribose-1-phosphate isomerase (Citrobacter koseri (strain ATCC BAA-895 / CDC 4225-83 / SGSC4696)).